The primary structure comprises 64 residues: Large ribosomal subunit protein bL35 (64 aa).

This sequence belongs to the bacterial ribosomal protein bL35 family.

This is Large ribosomal subunit protein bL35 from Pelodictyon phaeoclathratiforme (strain DSM 5477 / BU-1).